Reading from the N-terminus, the 735-residue chain is MAKDNEAIAINDAVHKLQLYMLENTTDQNQLFAARKLMSRSDYEDVVTERAIAKLCGYTLCQRFLPSDVSRRGKYRISLKDHKVYDLQETSKFCSAGCLIDSKTFSGSLQEARTLEFDSVKLNEILDLFGDSLEVKGSLDVNKDLDLSKLMIKENFGVRGEELSLEKWMGPSNAVEGYVPFDRSKSSNDSKATTQSNQEKHEMDFTSTVIMPDVNSVSKLPPQTKQASTVVESVDGKGKTVLKEQTVVPPTKKVSRFRREKEKEKKTFGVDGMGCAQEKTTVLPRKILSFCNEIEKDFKNFGFDEMGLASSAMMSDGYGVEYSVSKQPQCSMEDSLSCKLKGDLQTLDGKNTLSGSSSGSNTKGSKTKPEKSRKKIISVEYHANSYEDGEEILAAESYERHKAQDVCSSSEIVTKSCLKISGSKKLSRSVTWADQNDGRGDLCEVRNNDNAAGPSLSSNDIEDVNSLSRLALAEALATALSQAAEAVSSGNSDASDATAKAGIILLPSTHQLDEEVTEEHSEEEMTEEEPTLLKWPNKPGIPDSDLFDRDQSWFDGPPEGFNLTLSNFAVMWDSLFGWVSSSSLAYIYGKEESAHEEFLLVNGKEYPRRIIMVDGLSSEIKQTIAGCLARALPRVVTHLRLPIAISELEKGLGSLLETMSLTGAVPSFRVKEWLVIVLLFLDALSVSRIPRIAPYISNRDKILEGSGIGNEEYETMKDILLPLGRVPQFATRSGA.

The RTR1-type zinc finger occupies alanine 33 to aspartate 118. 4 residues coordinate Zn(2+): cysteine 56, cysteine 61, cysteine 94, and cysteine 98. Disordered regions lie at residues valine 179–histidine 201, glycine 349–lysine 374, and glutamate 519–lysine 538. A compositionally biased stretch (low complexity) spans glycine 349–glycine 364. Residues glutamate 519–proline 530 show a composition bias toward acidic residues.

Belongs to the RPAP2 family.

Its subcellular location is the nucleus. The enzyme catalyses O-phospho-L-seryl-[protein] + H2O = L-seryl-[protein] + phosphate. It carries out the reaction O-phospho-L-threonyl-[protein] + H2O = L-threonyl-[protein] + phosphate. Functionally, putative RNA polymerase II subunit B1 C-terminal domain (CTD) phosphatase involved in RNA polymerase II transcription regulation. This is Putative RNA polymerase II subunit B1 CTD phosphatase RPAP2 homolog from Arabidopsis thaliana (Mouse-ear cress).